Consider the following 284-residue polypeptide: Bifunctional protein FolD (284 aa).

Residues 166–168 and Ser191 each bind NADP(+); that span reads GRS.

It belongs to the tetrahydrofolate dehydrogenase/cyclohydrolase family. As to quaternary structure, homodimer.

The catalysed reaction is (6R)-5,10-methylene-5,6,7,8-tetrahydrofolate + NADP(+) = (6R)-5,10-methenyltetrahydrofolate + NADPH. The enzyme catalyses (6R)-5,10-methenyltetrahydrofolate + H2O = (6R)-10-formyltetrahydrofolate + H(+). It participates in one-carbon metabolism; tetrahydrofolate interconversion. Its function is as follows. Catalyzes the oxidation of 5,10-methylenetetrahydrofolate to 5,10-methenyltetrahydrofolate and then the hydrolysis of 5,10-methenyltetrahydrofolate to 10-formyltetrahydrofolate. The sequence is that of Bifunctional protein FolD from Leptospira borgpetersenii serovar Hardjo-bovis (strain JB197).